Here is an 871-residue protein sequence, read N- to C-terminus: MFSSDELRENYLKFFEEKGHKRIASSSLIPHNDPTLLLTTAGMVQFKPYYLGVAKPENPRMASCQKCFRTTDIESVGDASHLTMFEMLGNFSIGNYFKKEAIAWAWEYVTQRLNIPAERLWITVYLDDDEAIALWKEQGVPENRIVRLGAADNFWGPAGDSGPCGPCSEIHYDFGQETGCGKADCNPSCKCGRFCEIWNLVFVQFNQDKSGKRQNLPAPSIDTGMGLERLTILMQSKKNVYETDIFAPIVEKACLLSGRKYGCDAATDRALRIVSEHSRGITFLIADGVIPDKAGRGYVLRRLLRRAVLFGRRLGLERPFLVDMAGAVINRMSGIYPELKKRQTYVLEMIASEEARFSETLATGLELLEEIVRQTKGGRISGQDAFKLYDTYGFPVEMTTEIAAEKGLSVDLDGFESEMEIQRTKARSSRKFSFDAAATAEAVKNMRHAEKTCFVGYELAIQKSTIKDILTEGGTVDSIEEGDEASIVLDESPFYAEMGGQVGDTGEIITDAGRFEVKNTLHLPNGVFLHQGRVINGCLKISEAATAHINEERRRDIARNHTATHILQTALREVLGEQVQQRGSVVTPDRLRFDFSHLKPMSKDEMRRVEEFVNDKIRRNLPVYAEEMPYRHALEEGVTALFGEKYGDRVRVLRVGRPAVSAELCGGTHVTASGEIALFKIMSESSVGAGLRRIEAVTGREAEAFINLQQDSLSELSGMLESTAEESPRKLAELKEEIDTLKKAVQNLERQMSRGEAEELLSKAEDYKGVKLLVSRMTSVNADTLRETADFLRDKLGSGVIVLGTVTEDKPFFLCMVTPDLIAKGYHAGNIVKKLSQIAGGGGGGKPNMAQGGGRDKSKLDEALQAVKGMI.

Zn(2+) contacts are provided by histidine 561, histidine 565, cysteine 665, and histidine 669.

Belongs to the class-II aminoacyl-tRNA synthetase family. It depends on Zn(2+) as a cofactor.

It is found in the cytoplasm. It carries out the reaction tRNA(Ala) + L-alanine + ATP = L-alanyl-tRNA(Ala) + AMP + diphosphate. In terms of biological role, catalyzes the attachment of alanine to tRNA(Ala) in a two-step reaction: alanine is first activated by ATP to form Ala-AMP and then transferred to the acceptor end of tRNA(Ala). Also edits incorrectly charged Ser-tRNA(Ala) and Gly-tRNA(Ala) via its editing domain. This chain is Alanine--tRNA ligase, found in Dehalococcoides mccartyi (strain ATCC BAA-2100 / JCM 16839 / KCTC 5957 / BAV1).